Consider the following 336-residue polypeptide: Eukaryotic translation initiation factor 3 subunit I (336 aa).

WD repeat units lie at residues 8–47, 50–91, 146–185, 190–229, and 287–326; these read GHER…RLGT, GHLG…KVWE, CTES…QLEN, EFDH…ILKT, and GHFG…FDFM.

It belongs to the eIF-3 subunit I family. In terms of assembly, component of the eukaryotic translation initiation factor 3 (eIF-3) complex.

The protein resides in the cytoplasm. Its function is as follows. Component of the eukaryotic translation initiation factor 3 (eIF-3) complex, which is involved in protein synthesis of a specialized repertoire of mRNAs and, together with other initiation factors, stimulates binding of mRNA and methionyl-tRNAi to the 40S ribosome. The eIF-3 complex specifically targets and initiates translation of a subset of mRNAs involved in cell proliferation. In Emericella nidulans (strain FGSC A4 / ATCC 38163 / CBS 112.46 / NRRL 194 / M139) (Aspergillus nidulans), this protein is Eukaryotic translation initiation factor 3 subunit I (tif34).